The primary structure comprises 298 residues: Large ribosomal subunit protein uL18 (298 aa).

It belongs to the universal ribosomal protein uL18 family. Component of the large ribosomal subunit. Mature ribosomes consist of a small (40S) and a large (60S) subunit. The 40S subunit contains about 32 different proteins and 1 molecule of RNA (18S). The 60S subunit contains 45 different proteins and 3 molecules of RNA (25S, 5.8S and 5S).

It is found in the cytoplasm. Functionally, component of the ribosome, a large ribonucleoprotein complex responsible for the synthesis of proteins in the cell. The small ribosomal subunit (SSU) binds messenger RNAs (mRNAs) and translates the encoded message by selecting cognate aminoacyl-transfer RNA (tRNA) molecules. The large subunit (LSU) contains the ribosomal catalytic site termed the peptidyl transferase center (PTC), which catalyzes the formation of peptide bonds, thereby polymerizing the amino acids delivered by tRNAs into a polypeptide chain. The nascent polypeptides leave the ribosome through a tunnel in the LSU and interact with protein factors that function in enzymatic processing, targeting, and the membrane insertion of nascent chains at the exit of the ribosomal tunnel. The chain is Large ribosomal subunit protein uL18 from Candida albicans (strain SC5314 / ATCC MYA-2876) (Yeast).